Reading from the N-terminus, the 142-residue chain is Transcriptional regulator MraZ (142 aa).

SpoVT-AbrB domains are found at residues 5–51 and 77–120; these read ASSL…PRPE and AMDV…DKAT.

The protein belongs to the MraZ family. As to quaternary structure, forms oligomers.

The protein localises to the cytoplasm. It is found in the nucleoid. This is Transcriptional regulator MraZ from Variovorax paradoxus (strain S110).